Reading from the N-terminus, the 89-residue chain is MPAPRYKSGSSKKVYRKAPGNSSIVHYRRKKQSKAVCGACGALLNGVPRGRAVEITKLAKTEKRPERAFGGNLCPKCVKKMMVAKARNF.

Residues 1–22 are disordered; that stretch reads MPAPRYKSGSSKKVYRKAPGNS.

This sequence belongs to the eukaryotic ribosomal protein eL34 family.

The polypeptide is Large ribosomal subunit protein eL34 (Methanococcus maripaludis (strain C5 / ATCC BAA-1333)).